The sequence spans 451 residues: Phosphoglucosamine mutase (451 aa).

S102 (phosphoserine intermediate) is an active-site residue. S102, D243, D245, and D247 together coordinate Mg(2+). A Phosphoserine modification is found at S102.

This sequence belongs to the phosphohexose mutase family. Mg(2+) is required as a cofactor. Activated by phosphorylation.

The catalysed reaction is alpha-D-glucosamine 1-phosphate = D-glucosamine 6-phosphate. Catalyzes the conversion of glucosamine-6-phosphate to glucosamine-1-phosphate. In Sinorhizobium medicae (strain WSM419) (Ensifer medicae), this protein is Phosphoglucosamine mutase.